The following is a 100-amino-acid chain: HssA/B-like protein 37 (100 aa).

Disordered stretches follow at residues 1-29 and 67-100; these read MTLF…SGTS and RSRG…CCGI. Residues 71-93 are compositionally biased toward gly residues; the sequence is SCGGNRGNGNGNGGMGGGNGSCC.

This sequence belongs to the hssA/B family.

The polypeptide is HssA/B-like protein 37 (hssl37) (Dictyostelium discoideum (Social amoeba)).